Reading from the N-terminus, the 325-residue chain is Protease HtpX homolog 2 (325 aa).

2 helical membrane passes run 17 to 37 (IAILVLGFALIYGILGYFFGF) and 42 to 62 (LLITGALAFVTIFTILQWLFG). Residue His146 participates in Zn(2+) binding. Glu147 is an active-site residue. Position 150 (His150) interacts with Zn(2+). 2 helical membrane-spanning segments follow: residues 158–178 (LLLAVGLIPTLLYWIGYGLWW) and 195–215 (ILFLIGIALIAFSFLFNLFVL). Glu222 is a binding site for Zn(2+).

It belongs to the peptidase M48B family. It depends on Zn(2+) as a cofactor.

The protein localises to the cell membrane. This chain is Protease HtpX homolog 2, found in Sulfurisphaera tokodaii (strain DSM 16993 / JCM 10545 / NBRC 100140 / 7) (Sulfolobus tokodaii).